The primary structure comprises 467 residues: Probable glycerol-3-phosphate dehydrogenase [NAD(+)] 2, cytosolic (467 aa).

NAD(+) is bound by residues glycine 47–glycine 52, lysine 195, and alanine 234. Residue lysine 195 participates in substrate binding. Catalysis depends on lysine 284, which acts as the Proton acceptor. Residues arginine 346 and glutamine 374 each coordinate NAD(+). Arginine 346 to asparagine 347 is a substrate binding site.

The protein belongs to the NAD-dependent glycerol-3-phosphate dehydrogenase family.

The protein localises to the cytoplasm. It localises to the cytosol. The enzyme catalyses sn-glycerol 3-phosphate + NAD(+) = dihydroxyacetone phosphate + NADH + H(+). May be involved in cell redox homeostasis. This Oryza sativa subsp. japonica (Rice) protein is Probable glycerol-3-phosphate dehydrogenase [NAD(+)] 2, cytosolic.